The following is a 57-amino-acid chain: Large ribosomal subunit protein bL32 (57 aa).

This sequence belongs to the bacterial ribosomal protein bL32 family.

The sequence is that of Large ribosomal subunit protein bL32 from Ureaplasma parvum serovar 3 (strain ATCC 27815 / 27 / NCTC 11736).